Reading from the N-terminus, the 191-residue chain is Peptidyl-tRNA hydrolase (191 aa).

Tyr15 serves as a coordination point for tRNA. His20 acts as the Proton acceptor in catalysis. Residues Phe66, Asn68, and Asn114 each contribute to the tRNA site.

Belongs to the PTH family. In terms of assembly, monomer.

Its subcellular location is the cytoplasm. The catalysed reaction is an N-acyl-L-alpha-aminoacyl-tRNA + H2O = an N-acyl-L-amino acid + a tRNA + H(+). In terms of biological role, hydrolyzes ribosome-free peptidyl-tRNAs (with 1 or more amino acids incorporated), which drop off the ribosome during protein synthesis, or as a result of ribosome stalling. Its function is as follows. Catalyzes the release of premature peptidyl moieties from peptidyl-tRNA molecules trapped in stalled 50S ribosomal subunits, and thus maintains levels of free tRNAs and 50S ribosomes. The protein is Peptidyl-tRNA hydrolase of Streptococcus agalactiae serotype Ia (strain ATCC 27591 / A909 / CDC SS700).